Reading from the N-terminus, the 482-residue chain is MKFIIKLFPEITIKSQSVRLRFIKILTGNIRNVLKHYDETLAVVRHWDNIEVRAKDENQRLAIRDALTRIPGIHHILEVEDVPFTDMHDIFEKALVQYRDQLEGKTFCVRVKRRGKHDFSSIDVERYVGGGLNQHIESARVKLTNPEVTVHLEVEDDRLLLIKGRYEGIGGFPIGTQEDVLSLISGGFDSGVSSYMLMRRGCRVHYCFFNLGGAAHEIGVRQVAHYLWNRFGSSHRVRFVAINFEPVVGEILEKIDDGQMGVILKRMMVRAASKVAERYGVQALVTGEALGQVSSQTLTNLRLIDNVSDTLILRPLISYDKEHIINLARQIGTEDFARTMPEYCGVISKSPTVKAVKSKIEAEEEKFDFSILDKVVEEANNVDIREIAQQTEQEVVEVETVNGFGPNDVILDIRSIDEQEDKPLKVEGIDVVSLPFYKLSTKFGDLDQNRTWLLWCERGVMSRLQALYLREQGFNNVKVYRP.

Residues 61–165 (LAIRDALTRI…DDRLLLIKGR (105 aa)) enclose the THUMP domain. Residues 183 to 184 (LI), K265, G287, and Q296 each bind ATP. Residues C344 and C456 are joined by a disulfide bond. A Rhodanese domain is found at 404 to 482 (FGPNDVILDI…GFNNVKVYRP (79 aa)). The active-site Cysteine persulfide intermediate is C456.

Belongs to the ThiI family.

The protein resides in the cytoplasm. The enzyme catalyses [ThiI sulfur-carrier protein]-S-sulfanyl-L-cysteine + a uridine in tRNA + 2 reduced [2Fe-2S]-[ferredoxin] + ATP + H(+) = [ThiI sulfur-carrier protein]-L-cysteine + a 4-thiouridine in tRNA + 2 oxidized [2Fe-2S]-[ferredoxin] + AMP + diphosphate. The catalysed reaction is [ThiS sulfur-carrier protein]-C-terminal Gly-Gly-AMP + S-sulfanyl-L-cysteinyl-[cysteine desulfurase] + AH2 = [ThiS sulfur-carrier protein]-C-terminal-Gly-aminoethanethioate + L-cysteinyl-[cysteine desulfurase] + A + AMP + 2 H(+). It participates in cofactor biosynthesis; thiamine diphosphate biosynthesis. Its function is as follows. Catalyzes the ATP-dependent transfer of a sulfur to tRNA to produce 4-thiouridine in position 8 of tRNAs, which functions as a near-UV photosensor. Also catalyzes the transfer of sulfur to the sulfur carrier protein ThiS, forming ThiS-thiocarboxylate. This is a step in the synthesis of thiazole, in the thiamine biosynthesis pathway. The sulfur is donated as persulfide by IscS. This Escherichia coli (strain 55989 / EAEC) protein is tRNA sulfurtransferase.